Here is a 440-residue protein sequence, read N- to C-terminus: Virion host shutoff protein (440 aa).

2 disordered regions span residues 98 to 144 (NIDH…RRKT) and 265 to 312 (IDEP…AGPG). Residues 266–281 (DEPPAASEESSASDQQ) are compositionally biased toward low complexity.

This sequence belongs to the herpesviridae VHS protein family.

Its subcellular location is the virion. In terms of biological role, minor structural protein that acts as an endoribonuclease during lytic infection. Degrades host mRNAs in the cytoplasm by cutting them at preferred sites, including some in regions of translation initiation. This Amazona oratrix (yellow-headed parrot) protein is Virion host shutoff protein (UL41).